A 127-amino-acid polypeptide reads, in one-letter code: MIIGVGTDLVEIARIAQSIERLGERFIDRILTAAEKERWSEISNLEKANSFVAKRFAAKEAAVKALGTGIGLGVSFQHFNVSNLPSGQPVLTVDESIIARYDFPVSWHLSLTDEKAYAQAFVILESK.

Positions 8 and 60 each coordinate Mg(2+).

This sequence belongs to the P-Pant transferase superfamily. AcpS family. Requires Mg(2+) as cofactor.

It localises to the cytoplasm. The catalysed reaction is apo-[ACP] + CoA = holo-[ACP] + adenosine 3',5'-bisphosphate + H(+). Functionally, transfers the 4'-phosphopantetheine moiety from coenzyme A to a Ser of acyl-carrier-protein. This Marinomonas sp. (strain MWYL1) protein is Holo-[acyl-carrier-protein] synthase.